The following is a 468-amino-acid chain: Adenosylhomocysteinase (468 aa).

The substrate site is built by Thr63, Asp139, and Glu164. Residue 165 to 167 coordinates NAD(+); it reads TTT. Positions 194 and 198 each coordinate substrate. Residues Asn199, 228–233, Glu251, Asn300, 321–323, and Asn374 contribute to the NAD(+) site; these read GYGDVG and IGH.

The protein belongs to the adenosylhomocysteinase family. NAD(+) is required as a cofactor.

It is found in the cytoplasm. It carries out the reaction S-adenosyl-L-homocysteine + H2O = L-homocysteine + adenosine. Its pathway is amino-acid biosynthesis; L-homocysteine biosynthesis; L-homocysteine from S-adenosyl-L-homocysteine: step 1/1. May play a key role in the regulation of the intracellular concentration of adenosylhomocysteine. The sequence is that of Adenosylhomocysteinase from Stutzerimonas stutzeri (strain A1501) (Pseudomonas stutzeri).